Consider the following 258-residue polypeptide: MTIHLVVIDALNLIRRVHAAQPGEPDVKNTARVCCQALSKIIKFSEPSHIVAVFDHHGDDRGWRAKLLPHYKEGRKPMPPELQAGMEIIQDAFMDLGIDSLLSDGDEADDLVATLALKVASRHQQVTIISTDKGYCQLLSPTLRVRDYFQQRWLDSPFVEKEYGVKPEQLPDYWGLAGISSSKIPGIPGIGPKAALELLSLYPDLDTILQAEDLPTKWQKKITKHRESAEASKKVASLKTDLTLGFNLQDIRYLAPSS.

Residue Asp109 coordinates Mg(2+). Residues 165–254 enclose the 5'-3' exonuclease domain; the sequence is VKPEQLPDYW…GFNLQDIRYL (90 aa). K(+) is bound by residues Leu176, Ala177, Pro185, Ile187, and Ile190. The segment at 189–194 is interaction with DNA; that stretch reads GIGPKA.

It belongs to the Xni family. It depends on Mg(2+) as a cofactor. K(+) is required as a cofactor.

Has flap endonuclease activity. During DNA replication, flap endonucleases cleave the 5'-overhanging flap structure that is generated by displacement synthesis when DNA polymerase encounters the 5'-end of a downstream Okazaki fragment. The polypeptide is Flap endonuclease Xni (Photobacterium profundum (strain SS9)).